The following is a 397-amino-acid chain: Tryptophan synthase beta chain (397 aa).

Lysine 87 bears the N6-(pyridoxal phosphate)lysine mark.

This sequence belongs to the TrpB family. In terms of assembly, tetramer of two alpha and two beta chains. Pyridoxal 5'-phosphate serves as cofactor.

It catalyses the reaction (1S,2R)-1-C-(indol-3-yl)glycerol 3-phosphate + L-serine = D-glyceraldehyde 3-phosphate + L-tryptophan + H2O. The protein operates within amino-acid biosynthesis; L-tryptophan biosynthesis; L-tryptophan from chorismate: step 5/5. In terms of biological role, the beta subunit is responsible for the synthesis of L-tryptophan from indole and L-serine. The sequence is that of Tryptophan synthase beta chain from Escherichia fergusonii (strain ATCC 35469 / DSM 13698 / CCUG 18766 / IAM 14443 / JCM 21226 / LMG 7866 / NBRC 102419 / NCTC 12128 / CDC 0568-73).